The primary structure comprises 239 residues: MATPHINAEMGDFADVVLMPGDPLRAKHIAETFLEDVREVNNVRGMLGFTGTYKGRKISVMGHGMGIPSCSIYTKELITDFGVKKIIRVGSCGAVRMDVKLRDVVIGMGACTDSKVNRIRFKDHDFAAIADFDMVRNAVDAAKALGVDARVGNLFSADLFYSPDGDMFDVMEKYGILGVEMEAAGIYGVAAEFGAKALTICTVSDHIRTHEQTTAAERQTTFNDMIKIALESVLLGDKE.

Residue His5 coordinates a purine D-ribonucleoside. Phosphate-binding positions include Gly21, Arg25, Arg44, and 88–91; that span reads RVGS. A purine D-ribonucleoside-binding positions include 180–182 and 204–205; these read EME and SD. Residue Asp205 is the Proton donor of the active site.

The protein belongs to the PNP/UDP phosphorylase family. In terms of assembly, homohexamer; trimer of homodimers.

It carries out the reaction a purine D-ribonucleoside + phosphate = a purine nucleobase + alpha-D-ribose 1-phosphate. The enzyme catalyses a purine 2'-deoxy-D-ribonucleoside + phosphate = a purine nucleobase + 2-deoxy-alpha-D-ribose 1-phosphate. Its function is as follows. Catalyzes the reversible phosphorolytic breakdown of the N-glycosidic bond in the beta-(deoxy)ribonucleoside molecules, with the formation of the corresponding free purine bases and pentose-1-phosphate. This Salmonella arizonae (strain ATCC BAA-731 / CDC346-86 / RSK2980) protein is Purine nucleoside phosphorylase DeoD-type.